The following is a 370-amino-acid chain: Sphingosine 1-phosphate receptor 2 (370 aa).

Residues 1-57 (MTTCRLFAGFCQAVTMSKYSQYFNKTLIQVHYLTAKEMTAEELRDRIESKQSLSSLN) lie on the Extracellular side of the membrane. Asparagine 24 carries an N-linked (GlcNAc...) asparagine glycan. A helical transmembrane segment spans residues 58–78 (ILFVVICSIIILENLLVLIAV). The Cytoplasmic portion of the chain corresponds to 79–87 (FRNKKFHSA). A helical membrane pass occupies residues 88-108 (MFFFIGNLAFSDLLAGSAYIA). Over 109 to 128 (NIFLSGPRTFHLTPVQWFIR) the chain is Extracellular. The chain crosses the membrane as a helical span at residues 129–149 (EGTAFIALSASVFSLLAIAIE). At 150–167 (RYIAITKVKVYGSNKTCR) the chain is on the cytoplasmic side. The helical transmembrane segment at 168–193 (MFLLIGACWVMSILLGGLPIIGWNCI) threads the bilayer. The Extracellular portion of the chain corresponds to 194-219 (NNLDDCSAVLPLNTRYYIRFVVTIFS). A helical transmembrane segment spans residues 220–230 (IILLSIVILYV). Residues 231 to 254 (RIYLIVRTSHQEATNSPAYALLKT) are Cytoplasmic-facing. A helical membrane pass occupies residues 255-275 (VTIVLGVFIICWLPAFTILLL). Residues 276-289 (DTSCKMKQCPILNN) are Extracellular-facing. Residues 290-310 (AGIFFSFATLNSALNPLIYTL) traverse the membrane as a helical segment. Residues 311–370 (RSKDMRKEFLRVLCCWGLLNCGRPPHRCMVPLKSSSSMEHCTNKHEHQSIPIMQDCTTCV) are Cytoplasmic-facing. Cysteine 325 is lipidated: S-palmitoyl cysteine.

It belongs to the G-protein coupled receptor 1 family.

Its subcellular location is the cell membrane. Functionally, receptor for the lysosphingolipid sphingosine 1-phosphate (S1P). S1P receptor is critical for cell migration and epithelial integrity during vertebrate embryogenesis. Receptor for the chemokine-like protein FAM19A5. Mediates the inhibitory effect of FAM19A5 on vascular smooth muscle cell proliferation and migration. The chain is Sphingosine 1-phosphate receptor 2 (s1pr2) from Danio rerio (Zebrafish).